A 163-amino-acid polypeptide reads, in one-letter code: Phosphopantetheine adenylyltransferase (163 aa).

Residue Thr9 participates in substrate binding. ATP is bound by residues 9-10 and His17; that span reads TF. Positions 41, 73, and 87 each coordinate substrate. Residues 88–90, Glu98, and 123–129 contribute to the ATP site; these read GLR and FSFISSS.

Belongs to the bacterial CoaD family. As to quaternary structure, homohexamer. It depends on Mg(2+) as a cofactor.

It localises to the cytoplasm. The enzyme catalyses (R)-4'-phosphopantetheine + ATP + H(+) = 3'-dephospho-CoA + diphosphate. It functions in the pathway cofactor biosynthesis; coenzyme A biosynthesis; CoA from (R)-pantothenate: step 4/5. Reversibly transfers an adenylyl group from ATP to 4'-phosphopantetheine, yielding dephospho-CoA (dPCoA) and pyrophosphate. The sequence is that of Phosphopantetheine adenylyltransferase from Desulfitobacterium hafniense (strain Y51).